Reading from the N-terminus, the 831-residue chain is Phenylalanine--tRNA ligase beta subunit (831 aa).

The tRNA-binding domain maps to 42 to 157; it reads ADISGPIVVG…GFAEPGTKAD (116 aa). Residues 408–483 enclose the B5 domain; sequence VPREPIVVRA…RNEGYENIPA (76 aa). Positions 461, 467, 470, and 471 each coordinate Mg(2+). The FDX-ACB domain maps to 737–830; it reads STYPVATQDV…AAERTGAVLR (94 aa).

This sequence belongs to the phenylalanyl-tRNA synthetase beta subunit family. Type 1 subfamily. As to quaternary structure, tetramer of two alpha and two beta subunits. Mg(2+) serves as cofactor.

It is found in the cytoplasm. The catalysed reaction is tRNA(Phe) + L-phenylalanine + ATP = L-phenylalanyl-tRNA(Phe) + AMP + diphosphate + H(+). The chain is Phenylalanine--tRNA ligase beta subunit from Thermobifida fusca (strain YX).